The chain runs to 960 residues: Dynamin-like GTPase OPA1, mitochondrial (960 aa).

Residues 1-87 (MWRAGRAALA…TKYGYQPRRN (87 aa)) constitute a mitochondrion transit peptide. Residues 88 to 96 (FWPARLAAR) lie on the Mitochondrial matrix side of the membrane. Residues 97-113 (LLKLRYIILGSAVGGGY) traverse the membrane as a helical segment. Residues 114-770 (TAKKTFDEWK…NAIENMIGPD (657 aa)) lie on the Mitochondrial intermembrane side of the membrane. Residues 210-254 (SDKEKIDQLQEELLHTQLKYQRILERLEKENKELRKLVLQKDDKG) are a coiled coil. Positions 217–222 (QLQEEL) match the LQQQIQ motif motif. Position 228 is an N6-acetyllysine (K228). The LQQQIQ motif motif lies at 234–239 (ERLEKE). The Dynamin-type G domain occupies 285-561 (QDHLPRVVVV…FWKMVRESVE (277 aa)). Residues 295-302 (GDQSAGKT) form a G1 motif region. 6 residues coordinate GTP: S298, G300, K301, T302, S303, and G317. A Mg(2+)-binding site is contributed by T302. Positions 321 to 324 (MMTR) are G2 motif. Residues T323 and D398 each contribute to the Mg(2+) site. Residues 398–401 (DLPG) are G3 motif. The G4 motif stretch occupies residues 467–470 (TKVD). 3 residues coordinate GTP: K468, D470, and T503. The tract at residues 501-504 (VVTG) is G5 motif. 2 stalk region regions span residues 589 to 836 (DRNE…IKDT) and 874 to 928 (CNDV…VKLL). The segment at 736–856 (SDKQQWDAAI…KTALNHCNLC (121 aa)) is paddle region. The stretch at 771 to 781 (WKKRWIYWKNR) is an intramembrane region. Residues 782–960 (TQEQCVHNET…AFIEALHQEK (179 aa)) are Mitochondrial intermembrane-facing. Residues C856 and C874 are joined by a disulfide bond. Positions 895–960 (RQQLTNTEVR…AFIEALHQEK (66 aa)) form a coiled coil.

Belongs to the TRAFAC class dynamin-like GTPase superfamily. Dynamin/Fzo/YdjA family. As to quaternary structure, oligomeric complex consisting of membrane-bound and soluble forms of OPA1. Interacts with RCC1L; RCC1L acts as a guanine nucleotide exchange factor (GEF) for OPA1 by exchanging bound GDP for free GTP. Interacts with CHCHD3 and IMMT; these interactions occur preferentially with soluble OPA1 forms. Interacts with PRELID1. Cleaved by OMA1 or YME1L downstream of the transmembrane region in response to different signals to generate soluble forms. Cleaved by OMA1 at position S1 following stress conditions, generating the short soluble form (Dynamin-like GTPase OPA1, short form; S-OPA1). AFG3L2 is involved in the regulation of OMA1-dependent processing of OPA1. PARL-dependent proteolytic processing releases an antiapoptotic soluble form not required for mitochondrial fusion. In terms of processing, cleavage at position S2 by YME1L is required to mediate oxidative phosphorylation (OXPHOS)-induced mitochondrial fusion. Cleavage occurs in the sequence motif Leu-Gln-Gln-Gln-Ile-Gln (LQQQIQ). Expressed in brain as well as retinal ganglion, starbust amacrine and horizontal cells of the retina. Absent from nerve fibers and photoreceptor cells of the retina.

It localises to the mitochondrion inner membrane. The protein resides in the mitochondrion intermembrane space. It carries out the reaction GTP + H2O = GDP + phosphate + H(+). Its activity is regulated as follows. Activated by guanine nucleotide exchange factor RCC1L. Functionally, dynamin-related GTPase that is essential for normal mitochondrial morphology by mediating fusion of the mitochondrial inner membranes, regulating cristae morphology and maintaining respiratory chain function. Exists in two forms: the transmembrane, long form (Dynamin-like GTPase OPA1, long form; L-OPA1), which is tethered to the inner mitochondrial membrane, and the short soluble form (Dynamin-like GTPase OPA1, short form; S-OPA1), which results from proteolytic cleavage and localizes in the intermembrane space. Both forms (L-OPA1 and S-OPA1) cooperate to catalyze the fusion of the mitochondrial inner membrane. The equilibrium between L-OPA1 and S-OPA1 is essential: excess levels of S-OPA1, produced by cleavage by OMA1 following loss of mitochondrial membrane potential, lead to an impaired equilibrium between L-OPA1 and S-OPA1, inhibiting mitochondrial fusion. The balance between L-OPA1 and S-OPA1 also influences cristae shape and morphology. Involved in remodeling cristae and the release of cytochrome c during apoptosis. Proteolytic processing by PARL in response to intrinsic apoptotic signals may lead to disassembly of OPA1 oligomers and release of the caspase activator cytochrome C (CYCS) into the mitochondrial intermembrane space. Acts as a regulator of T-helper Th17 cells, which are characterized by cells with fused mitochondria with tight cristae, by mediating mitochondrial membrane remodeling: OPA1 is required for interleukin-17 (IL-17) production. Its role in mitochondrial morphology is required for mitochondrial genome maintenance. Constitutes the transmembrane long form (L-OPA1) that plays a central role in mitochondrial inner membrane fusion and cristae morphology. L-OPA1 and the soluble short form (S-OPA1) form higher-order helical assemblies that coordinate the fusion of mitochondrial inner membranes. Inner membrane-anchored L-OPA1 molecules initiate membrane remodeling by recruiting soluble S-OPA1 to rapidly polymerize into a flexible cylindrical scaffold encaging the mitochondrial inner membrane. Once at the membrane surface, the formation of S-OPA1 helices induce bilayer curvature. OPA1 dimerization through the paddle region, which inserts into cardiolipin-containing membrane, promotes GTP hydrolysis and the helical assembly of a flexible OPA1 lattice on the membrane, which drives membrane curvature and mitochondrial fusion. Plays a role in the maintenance and remodeling of mitochondrial cristae, some invaginations of the mitochondrial inner membrane that provide an increase in the surface area. Probably acts by forming helical filaments at the inside of inner membrane tubes with the shape and dimensions of crista junctions. The equilibrium between L-OPA1 and S-OPA1 influences cristae shape and morphology: increased L-OPA1 levels promote cristae stacking and elongated mitochondria, while increased S-OPA1 levels correlated with irregular cristae packing and round mitochondria shape. Its function is as follows. Constitutes the soluble short form (S-OPA1) generated by cleavage by OMA1, which plays a central role in mitochondrial inner membrane fusion and cristae morphology. The transmembrane long form (L-OPA1) and the S-OPA1 form higher-order helical assemblies that coordinate the fusion of mitochondrial inner membranes. Inner membrane-anchored L-OPA1 molecules initiate membrane remodeling by recruiting soluble S-OPA1 to rapidly polymerize into a flexible cylindrical scaffold encaging the mitochondrial inner membrane. Once at the membrane surface, the formation of S-OPA1 helices induce bilayer curvature. OPA1 dimerization through the paddle region, which inserts into cardiolipin-containing membrane, promotes GTP hydrolysis and the helical assembly of a flexible OPA1 lattice on the membrane, which drives membrane curvature and mitochondrial fusion. Excess levels of S-OPA1 produced by cleavage by OMA1 following stress conditions that induce loss of mitochondrial membrane potential, lead to an impaired equilibrium between L-OPA1 and S-OPA1, thereby inhibiting mitochondrial fusion. Involved in mitochondrial safeguard in response to transient mitochondrial membrane depolarization by mediating flickering: cleavage by OMA1 leads to excess production of S-OPA1, preventing mitochondrial hyperfusion. Plays a role in the maintenance and remodeling of mitochondrial cristae, some invaginations of the mitochondrial inner membrane that provide an increase in the surface area. Probably acts by forming helical filaments at the inside of inner membrane tubes with the shape and dimensions of crista junctions. The equilibrium between L-OPA1 and S-OPA1 influences cristae shape and morphology: increased L-OPA1 levels promote cristae stacking and elongated mitochondria, while increased S-OPA1 levels correlated with irregular cristae packing and round mitochondria shape. In terms of biological role, isoforms that contain the alternative exon 4b are required for mitochondrial genome maintenance, possibly by anchoring the mitochondrial nucleoids to the inner mitochondrial membrane. The sequence is that of Dynamin-like GTPase OPA1, mitochondrial from Rattus norvegicus (Rat).